Reading from the N-terminus, the 344-residue chain is MIKVGIVGGTGYTGVELLRLLAQHPQAEVAVITSRSEAGVAVADMYPNLRGHYDGLAFSVPDSKALGACDVVFFATPHGVAHALAGELLAAGTKVIDLSADFRLQDAVEWGKWYGQPHGAPELLKDAVYGLPEVNREKIRQARLIAVPGCYPTATQLGFLPLLEAGLADASRLIADCKSGVSGAGRGAAVGSLFCEAGESMKAYAVKGHRHLPEISQGLRLAAGKDIGLTFVPHLTPMIRGIHATLYANVVDTSVDLQALFEKRYADEPFVDVMPAGSHPETRSVRGANVCRIAVHRPQGGDLVVVLSVIDNLVKGASGQAVQNLNILFGLDERMGLSHAGLLP.

The active site involves cysteine 150.

This sequence belongs to the NAGSA dehydrogenase family. Type 1 subfamily.

It localises to the cytoplasm. It carries out the reaction N-acetyl-L-glutamate 5-semialdehyde + phosphate + NADP(+) = N-acetyl-L-glutamyl 5-phosphate + NADPH + H(+). It participates in amino-acid biosynthesis; L-arginine biosynthesis; N(2)-acetyl-L-ornithine from L-glutamate: step 3/4. In terms of biological role, catalyzes the NADPH-dependent reduction of N-acetyl-5-glutamyl phosphate to yield N-acetyl-L-glutamate 5-semialdehyde. The chain is N-acetyl-gamma-glutamyl-phosphate reductase from Pseudomonas putida (strain ATCC 700007 / DSM 6899 / JCM 31910 / BCRC 17059 / LMG 24140 / F1).